We begin with the raw amino-acid sequence, 611 residues long: Chaperone protein DnaK (611 aa).

Phosphothreonine; by autocatalysis is present on threonine 173. Residues alanine 577–glycine 591 show a composition bias toward low complexity. Residues alanine 577 to lysine 611 form a disordered region. A compositionally biased stretch (acidic residues) spans valine 599–lysine 611.

This sequence belongs to the heat shock protein 70 family.

Acts as a chaperone. In Lysinibacillus sphaericus (strain C3-41), this protein is Chaperone protein DnaK.